We begin with the raw amino-acid sequence, 253 residues long: 5-oxoprolinase subunit A (253 aa).

It belongs to the LamB/PxpA family. Forms a complex composed of PxpA, PxpB and PxpC.

It carries out the reaction 5-oxo-L-proline + ATP + 2 H2O = L-glutamate + ADP + phosphate + H(+). Catalyzes the cleavage of 5-oxoproline to form L-glutamate coupled to the hydrolysis of ATP to ADP and inorganic phosphate. In Shouchella clausii (strain KSM-K16) (Alkalihalobacillus clausii), this protein is 5-oxoprolinase subunit A.